A 318-amino-acid polypeptide reads, in one-letter code: Deoxyribose-phosphate aldolase (318 aa).

Asp155 acts as the Proton donor/acceptor in catalysis. Residue Lys218 is the Schiff-base intermediate with acetaldehyde of the active site. Lys254 acts as the Proton donor/acceptor in catalysis.

This sequence belongs to the DeoC/FbaB aldolase family. DeoC type 2 subfamily. In terms of assembly, interacts with YBX1. Mainly expressed in liver, lung and colon.

It localises to the cytoplasm. It is found in the cytoplasmic granule. The protein localises to the nucleus. The catalysed reaction is 2-deoxy-D-ribose 5-phosphate = D-glyceraldehyde 3-phosphate + acetaldehyde. It participates in carbohydrate degradation; 2-deoxy-D-ribose 1-phosphate degradation; D-glyceraldehyde 3-phosphate and acetaldehyde from 2-deoxy-alpha-D-ribose 1-phosphate: step 2/2. Functionally, catalyzes a reversible aldol reaction between acetaldehyde and D-glyceraldehyde 3-phosphate to generate 2-deoxy-D-ribose 5-phosphate. Participates in stress granule (SG) assembly. May allow ATP production from extracellular deoxyinosine in conditions of energy deprivation. The sequence is that of Deoxyribose-phosphate aldolase (DERA) from Homo sapiens (Human).